The chain runs to 257 residues: Short chain dehydrogenase helC (257 aa).

Residues 1 to 22 form the signal peptide; that stretch reads MNTAIITGAAQGVGLCIAEALA. Residue V13 participates in NADP(+) binding. An N-linked (GlcNAc...) asparagine glycan is attached at N46. Residues D60 and N87 each coordinate NADP(+). N110 is a glycosylation site (N-linked (GlcNAc...) asparagine). The NADP(+) site is built by Y154, K158, I185, and T187. Residue Y154 is the Proton acceptor of the active site. K158 (lowers pKa of active site Tyr) is an active-site residue.

The protein belongs to the short-chain dehydrogenases/reductases (SDR) family.

It functions in the pathway mycotoxin biosynthesis. In terms of biological role, short chain dehydrogenase; part of the gene cluster that mediates the biosynthesis of helvolic acid, an antibacterial nortriterpenoid. Protostadienol synthase helA cyclizes (3S)-oxidosqualene to (17Z)-protosta-17(20),24-dien-3-beta-ol (protostadienol). The synthesis of protostadienol is followed by several steps of monooxygenation, dehydrogenation, and acyl transfer to yield the final helvolic acid. Following the cyclization to the tetracyclic protostadienol by helA, cytochrome P450 monooxygenases helB1-mediated and helB2-mediated oxidation at C-4 and C-16, acyltransferase helD2-dependent acetylation of 16-OH, oxidation of C-21 by cytochrome P450 monooxygenase helB4, and short chain dehydrogenase helC-dependent oxidative decarboxylation yield the fusidane skeleton. This intermediate is further modified in three additional steps mediated by the cytochrome P450 monooxygenase helB3, the acyltransferase helD1, and the 3-ketosteroid 1-dehydrogenase helE to give helvolic acid. Compared with the late stages in the biosynthesis of helvolic acid, enzymes involved in the early stage modifications act in a relatively strict order. The hydroxylation of C-16 by helB1 and subsequent acetylation by helD2 should occur before the helB3-mediated oxidation of C-21. C-4 demethylation in fusidane-type antibiotics proceeds in an unusual manner though it is also achieved by oxidative decarboxylation. The methyl group at C-4 beta position is oxidized by helB1 and subsequently removed by the short chain dehydrogenase helC. This is Short chain dehydrogenase helC from Aspergillus fumigatus (strain ATCC MYA-4609 / CBS 101355 / FGSC A1100 / Af293) (Neosartorya fumigata).